Reading from the N-terminus, the 65-residue chain is MAEKKGKTVTVEQIGSPIRRPAEQRATLIGLGLNKMHRRSTLEDTPAVRGMIAKLPHLVRVVDEA.

Belongs to the universal ribosomal protein uL30 family. In terms of assembly, part of the 50S ribosomal subunit.

This Brucella suis (strain ATCC 23445 / NCTC 10510) protein is Large ribosomal subunit protein uL30.